A 445-amino-acid polypeptide reads, in one-letter code: Ribosomal protein uS12 methylthiotransferase RimO (445 aa).

In terms of domain architecture, MTTase N-terminal spans 13 to 123 (PRVGFVSLGC…VMAAIHHHLP (111 aa)). [4Fe-4S] cluster contacts are provided by cysteine 22, cysteine 58, cysteine 87, cysteine 154, cysteine 158, and cysteine 161. The Radical SAM core domain occupies 140 to 377 (LTPKHYAYLK…MQQQEIISKQ (238 aa)). One can recognise a TRAM domain in the interval 380 to 445 (AVKKGQQLRV…DIHDLWTEKI (66 aa)).

It belongs to the methylthiotransferase family. RimO subfamily. It depends on [4Fe-4S] cluster as a cofactor.

It is found in the cytoplasm. The enzyme catalyses L-aspartate(89)-[ribosomal protein uS12]-hydrogen + (sulfur carrier)-SH + AH2 + 2 S-adenosyl-L-methionine = 3-methylsulfanyl-L-aspartate(89)-[ribosomal protein uS12]-hydrogen + (sulfur carrier)-H + 5'-deoxyadenosine + L-methionine + A + S-adenosyl-L-homocysteine + 2 H(+). Its function is as follows. Catalyzes the methylthiolation of an aspartic acid residue of ribosomal protein uS12. This Nitrosomonas eutropha (strain DSM 101675 / C91 / Nm57) protein is Ribosomal protein uS12 methylthiotransferase RimO.